Here is a 130-residue protein sequence, read N- to C-terminus: MNFVFLWAALGGAIGSSLRYFVGKVMPSKFLMFESFPLGTFSVNLIGCFVIGFMGHLAAKKVFGDDFGIFFVTGVLGGFTTFSSYGLDTLKLLQKSQYLEAVSYVLGTNLLGLIGVAIGWFLAKNFVGVN.

Helical transmembrane passes span 3–23, 38–58, 67–87, and 102–122; these read FVFLWAALGGAIGSSLRYFVG, LGTFSVNLIGCFVIGFMGHLA, FGIFFVTGVLGGFTTFSSYGL, and VSYVLGTNLLGLIGVAIGWFL. Na(+)-binding residues include glycine 77 and threonine 80.

This sequence belongs to the fluoride channel Fluc/FEX (TC 1.A.43) family.

The protein resides in the cell inner membrane. It carries out the reaction fluoride(in) = fluoride(out). Its activity is regulated as follows. Na(+) is not transported, but it plays an essential structural role and its presence is essential for fluoride channel function. In terms of biological role, fluoride-specific ion channel. Important for reducing fluoride concentration in the cell, thus reducing its toxicity. The sequence is that of Fluoride-specific ion channel FluC from Helicobacter pylori (strain HPAG1).